Reading from the N-terminus, the 278-residue chain is MKKRKQYCGYIAIVGKPNVGKSTLINEIIENEISITSKKKNTTQKNILGIKTKQLHQFIYVDTPGIYLNNEKDDSFKIIKSSILILFIVDRTVWKTDDEIVLNKIKKNKIPIICVINKIDKILDKSIILPHINFLLKKINPIEIIPISAKKRENIVLLENLIYPYLPNNNHIFPKKYITTHSLSFSISEIIRQKLIFFLRDELPSIITVKIESIEEKFKKKLYIRAAIYVKHERQKKIIIGKKAEGIKKISIASRLDIEKKINMKIYLIIWVKVKIKK.

One can recognise an Era-type G domain in the interval 7–168; that stretch reads YCGYIAIVGK…ENLIYPYLPN (162 aa). The G1 stretch occupies residues 15 to 22; sequence GKPNVGKS. GTP is bound at residue 15–22; it reads GKPNVGKS. Residues 41–45 are G2; that stretch reads NTTQK. The G3 stretch occupies residues 62–65; that stretch reads DTPG. Residues 62–66 and 117–120 each bind GTP; these read DTPGI and NKID. Residues 117 to 120 form a G4 region; it reads NKID. Residues 147 to 149 are G5; it reads ISA. Positions 199-276 constitute a KH type-2 domain; it reads LRDELPSIIT…YLIIWVKVKI (78 aa).

Belongs to the TRAFAC class TrmE-Era-EngA-EngB-Septin-like GTPase superfamily. Era GTPase family. As to quaternary structure, monomer.

The protein resides in the cytoplasm. It localises to the cell membrane. Functionally, an essential GTPase that binds both GDP and GTP, with rapid nucleotide exchange. Plays a role in 16S rRNA processing and 30S ribosomal subunit biogenesis and possibly also in cell cycle regulation and energy metabolism. The sequence is that of GTPase Era from Buchnera aphidicola subsp. Schizaphis graminum (strain Sg).